The sequence spans 428 residues: Glutamate-1-semialdehyde 2,1-aminomutase (428 aa).

Residue Lys-265 is modified to N6-(pyridoxal phosphate)lysine.

It belongs to the class-III pyridoxal-phosphate-dependent aminotransferase family. HemL subfamily. Homodimer. Requires pyridoxal 5'-phosphate as cofactor.

The protein localises to the cytoplasm. It carries out the reaction (S)-4-amino-5-oxopentanoate = 5-aminolevulinate. It functions in the pathway porphyrin-containing compound metabolism; protoporphyrin-IX biosynthesis; 5-aminolevulinate from L-glutamyl-tRNA(Glu): step 2/2. This is Glutamate-1-semialdehyde 2,1-aminomutase from Aeromonas hydrophila subsp. hydrophila (strain ATCC 7966 / DSM 30187 / BCRC 13018 / CCUG 14551 / JCM 1027 / KCTC 2358 / NCIMB 9240 / NCTC 8049).